The primary structure comprises 455 residues: Bifunctional protein GlmU (455 aa).

The segment at 1–226 (MSLDIVILAA…AMEVQGANDR (226 aa)) is pyrophosphorylase. Residues 8-11 (LAAG), Lys-22, Gln-73, 78-79 (GT), 99-101 (YGD), Gly-136, Glu-151, Asn-166, and Asn-224 each bind UDP-N-acetyl-alpha-D-glucosamine. Residue Asp-101 participates in Mg(2+) binding. Mg(2+) is bound at residue Asn-224. The tract at residues 227–247 (RQLSELERHYQLREGRRLMAQ) is linker. The interval 248–455 (GVTLRDPARF…WKRPEKIKKS (208 aa)) is N-acetyltransferase. Arg-330 and Lys-348 together coordinate UDP-N-acetyl-alpha-D-glucosamine. His-360 functions as the Proton acceptor in the catalytic mechanism. Residues Tyr-363 and Asn-374 each coordinate UDP-N-acetyl-alpha-D-glucosamine. Acetyl-CoA-binding positions include Ala-377, 383-384 (NY), Ser-402, Ala-420, and Arg-437.

It in the N-terminal section; belongs to the N-acetylglucosamine-1-phosphate uridyltransferase family. The protein in the C-terminal section; belongs to the transferase hexapeptide repeat family. In terms of assembly, homotrimer. It depends on Mg(2+) as a cofactor.

It localises to the cytoplasm. The enzyme catalyses alpha-D-glucosamine 1-phosphate + acetyl-CoA = N-acetyl-alpha-D-glucosamine 1-phosphate + CoA + H(+). It catalyses the reaction N-acetyl-alpha-D-glucosamine 1-phosphate + UTP + H(+) = UDP-N-acetyl-alpha-D-glucosamine + diphosphate. Its pathway is nucleotide-sugar biosynthesis; UDP-N-acetyl-alpha-D-glucosamine biosynthesis; N-acetyl-alpha-D-glucosamine 1-phosphate from alpha-D-glucosamine 6-phosphate (route II): step 2/2. It participates in nucleotide-sugar biosynthesis; UDP-N-acetyl-alpha-D-glucosamine biosynthesis; UDP-N-acetyl-alpha-D-glucosamine from N-acetyl-alpha-D-glucosamine 1-phosphate: step 1/1. It functions in the pathway bacterial outer membrane biogenesis; LPS lipid A biosynthesis. Its function is as follows. Catalyzes the last two sequential reactions in the de novo biosynthetic pathway for UDP-N-acetylglucosamine (UDP-GlcNAc). The C-terminal domain catalyzes the transfer of acetyl group from acetyl coenzyme A to glucosamine-1-phosphate (GlcN-1-P) to produce N-acetylglucosamine-1-phosphate (GlcNAc-1-P), which is converted into UDP-GlcNAc by the transfer of uridine 5-monophosphate (from uridine 5-triphosphate), a reaction catalyzed by the N-terminal domain. In Pseudomonas putida (strain ATCC 47054 / DSM 6125 / CFBP 8728 / NCIMB 11950 / KT2440), this protein is Bifunctional protein GlmU.